The primary structure comprises 892 residues: Protein BNI4 (892 aa).

Phosphoserine occurs at positions 43 and 133. 2 disordered regions span residues 185-287 (DFLS…EDTS) and 305-387 (KPVI…QDTE). Basic and acidic residues predominate over residues 208 to 223 (TILERDNNLPVKREEN). Polar residues-rich tracts occupy residues 224 to 236 (TIIN…TTHS) and 270 to 280 (DSSAQRTTSAG). The residue at position 281 (Ser-281) is a Phosphoserine. A compositionally biased stretch (polar residues) spans 309–335 (GNNSVTNEKNKMSSSSTFSMNIQTSLK). The segment covering 346-356 (SSSSIFNSFLK) has biased composition (low complexity). Residues 357–371 (GKIETSDSPRKEPMR) are compositionally biased toward basic and acidic residues. Phosphoserine is present on residues Ser-364 and Ser-394. Phosphothreonine is present on Thr-410. A phosphoserine mark is found at Ser-476, Ser-500, and Ser-503. Disordered regions lie at residues 506-526 (RTRS…RSLT), 618-644 (SDEE…SERQ), and 685-734 (YATE…GDER). Ser-618 carries the phosphoserine modification. Residues 624 to 643 (EVERDVPKPREEPLKKDSER) show a composition bias toward basic and acidic residues. Thr-703 carries the post-translational modification Phosphothreonine. A compositionally biased stretch (basic and acidic residues) spans 707-719 (RNNKEDSYKERET). Ser-746 and Ser-825 each carry phosphoserine.

As to quaternary structure, may interact with CHS3 and seems to be an adapter (along with SKT5) to link CHS3 to septins.

The chain is Protein BNI4 (BNI4) from Saccharomyces cerevisiae (strain ATCC 204508 / S288c) (Baker's yeast).